The following is a 300-amino-acid chain: MKIDLTTLVTESRNKASENIDVLSTVEMLTVINQEDQKVALAVEAILPQIADVVDAIAVAFQSGGRLIYTGAGTSGRLGILDASECPPTYGSNPDLVVGLIAGGHKAILKAVENAEDNRELGASDLQDLGLNEKDVLVGIAASGRTPYVLGAMEYAKSVGATVATLSCNPNSPMTELADINMTPVVGPEVVTGSSRMKAGTAQKLVLNMLTTGAMIRTGKVFGNLMVDVEATNAKLVQRQKNIVIEATGCSEVEASEALSQCDNHCKTAILMVLSGLDAQSAKAKLAQHNGFIRNALSDQ.

The 164-residue stretch at 57-220 folds into the SIS domain; it reads IAVAFQSGGR…TTGAMIRTGK (164 aa). E85 acts as the Proton donor in catalysis. E116 is a catalytic residue.

Belongs to the GCKR-like family. MurNAc-6-P etherase subfamily. As to quaternary structure, homodimer.

It carries out the reaction N-acetyl-D-muramate 6-phosphate + H2O = N-acetyl-D-glucosamine 6-phosphate + (R)-lactate. It participates in amino-sugar metabolism; 1,6-anhydro-N-acetylmuramate degradation. Its pathway is amino-sugar metabolism; N-acetylmuramate degradation. It functions in the pathway cell wall biogenesis; peptidoglycan recycling. Specifically catalyzes the cleavage of the D-lactyl ether substituent of MurNAc 6-phosphate, producing GlcNAc 6-phosphate and D-lactate. Together with AnmK, is also required for the utilization of anhydro-N-acetylmuramic acid (anhMurNAc) either imported from the medium or derived from its own cell wall murein, and thus plays a role in cell wall recycling. This Aliivibrio fischeri (strain ATCC 700601 / ES114) (Vibrio fischeri) protein is N-acetylmuramic acid 6-phosphate etherase.